Reading from the N-terminus, the 40-residue chain is Photosystem II reaction center protein J (40 aa).

Residues 8–28 (IPLWLIGTVTGILVIGLIGFF) form a helical membrane-spanning segment.

The protein belongs to the PsbJ family. As to quaternary structure, PSII is composed of 1 copy each of membrane proteins PsbA, PsbB, PsbC, PsbD, PsbE, PsbF, PsbH, PsbI, PsbJ, PsbK, PsbL, PsbM, PsbT, PsbX, PsbY, PsbZ, Psb30/Ycf12, at least 3 peripheral proteins of the oxygen-evolving complex and a large number of cofactors. It forms dimeric complexes.

It is found in the plastid. Its subcellular location is the chloroplast thylakoid membrane. Functionally, one of the components of the core complex of photosystem II (PSII). PSII is a light-driven water:plastoquinone oxidoreductase that uses light energy to abstract electrons from H(2)O, generating O(2) and a proton gradient subsequently used for ATP formation. It consists of a core antenna complex that captures photons, and an electron transfer chain that converts photonic excitation into a charge separation. In Zea mays (Maize), this protein is Photosystem II reaction center protein J.